Here is a 377-residue protein sequence, read N- to C-terminus: Probable dehydratase NIT22 (377 aa).

NADP(+)-binding residues include Lys-101 and Arg-196. Residues 220–243 (ERGPKMNEHVPSTPPRRPDAVSSF) form a disordered region. In terms of domain architecture, MaoC-like spans 233 to 332 (PPRRPDAVSS…ILMWDMGLCK (100 aa)). Residues Thr-265 and Ile-287 each coordinate NADP(+).

This sequence belongs to the short-chain dehydrogenases/reductases (SDR) family.

It participates in siderophore biosynthesis. Functionally, probable dehydratase; part of the gene cluster that mediates the biosynthesis of hydroxamate-containing siderophores that play a critical role in virulence via intracellular iron acquisition during macrophage infection. This Ajellomyces capsulatus (Darling's disease fungus) protein is Probable dehydratase NIT22.